A 43-amino-acid chain; its full sequence is Protein PsbN (43 aa).

The helical transmembrane segment at 7 to 24 threads the bilayer; the sequence is VAISISRSLVSFTGYALY.

The protein belongs to the PsbN family.

It localises to the plastid. The protein resides in the chloroplast thylakoid membrane. Its function is as follows. May play a role in photosystem I and II biogenesis. This is Protein PsbN from Ginkgo biloba (Ginkgo).